Consider the following 214-residue polypeptide: Uracil phosphoribosyltransferase (214 aa).

5-phospho-alpha-D-ribose 1-diphosphate-binding positions include Arg81, Arg106, and 133-141 (DPMLATGNS). Uracil contacts are provided by residues Ile196 and 201-203 (GDA). 5-phospho-alpha-D-ribose 1-diphosphate is bound at residue Asp202.

The protein belongs to the UPRTase family. Requires Mg(2+) as cofactor.

It catalyses the reaction UMP + diphosphate = 5-phospho-alpha-D-ribose 1-diphosphate + uracil. The protein operates within pyrimidine metabolism; UMP biosynthesis via salvage pathway; UMP from uracil: step 1/1. With respect to regulation, allosterically activated by GTP. In terms of biological role, catalyzes the conversion of uracil and 5-phospho-alpha-D-ribose 1-diphosphate (PRPP) to UMP and diphosphate. In Legionella pneumophila (strain Paris), this protein is Uracil phosphoribosyltransferase.